A 495-amino-acid chain; its full sequence is DNA double-strand break repair helicase HerA (495 aa).

ATP contacts are provided by residues arginine 142, 151–156 (GSGKSN), and 459–460 (KI).

Belongs to the HerA family. As to quaternary structure, interacts with Rad50 and Mre11.

The enzyme catalyses Couples ATP hydrolysis with the unwinding of duplex DNA at the replication fork by translocating in the 5'-3' direction. This creates two antiparallel DNA single strands (ssDNA). The leading ssDNA polymer is the template for DNA polymerase III holoenzyme which synthesizes a continuous strand.. The catalysed reaction is ATP + H2O = ADP + phosphate + H(+). It catalyses the reaction Couples ATP hydrolysis with the unwinding of duplex DNA by translocating in the 3'-5' direction.. ATPase activity is slightly stimulated by either circular single- or double-stranded (ds)DNA with a weak preference for dsDNA. In terms of biological role, involved in DNA double-strand break (DSB) repair. Probably acts with NurA to stimulate resection of the 5' strand and produce the long 3' single-strand that is required for RadA loading. Has DNA-dependent ATPase activity and bidirectional DNA helicase activity. Loads on either a 3' or a 5' DNA tail for subsequent DNA unwinding; has no activity on blunt-end DNA. The chain is DNA double-strand break repair helicase HerA from Sulfolobus acidocaldarius (strain ATCC 33909 / DSM 639 / JCM 8929 / NBRC 15157 / NCIMB 11770).